Reading from the N-terminus, the 686-residue chain is Translation initiation factor IF-2 (686 aa).

Residues 61–98 (FEVEEKVVRSKKNSNKKKKKGKGNEDKRQENFAGRQQT) form a disordered region. Residues 69–81 (RSKKNSNKKKKKG) show a composition bias toward basic residues. The region spanning 188–357 (ERPAVVTIMG…LLVSEVEEYK (170 aa)) is the tr-type G domain. The segment at 197 to 204 (GHVDHGKT) is G1. 197–204 (GHVDHGKT) contributes to the GTP binding site. The tract at residues 222–226 (GITQH) is G2. A G3 region spans residues 243 to 246 (DTPG). Residues 243–247 (DTPGH) and 297–300 (NKMD) each bind GTP. Positions 297–300 (NKMD) are G4. The tract at residues 333-335 (SAI) is G5.

It belongs to the TRAFAC class translation factor GTPase superfamily. Classic translation factor GTPase family. IF-2 subfamily.

It is found in the cytoplasm. Functionally, one of the essential components for the initiation of protein synthesis. Protects formylmethionyl-tRNA from spontaneous hydrolysis and promotes its binding to the 30S ribosomal subunits. Also involved in the hydrolysis of GTP during the formation of the 70S ribosomal complex. The sequence is that of Translation initiation factor IF-2 from Bacillus cereus (strain B4264).